A 977-amino-acid chain; its full sequence is Leucine--tRNA ligase (977 aa).

The 'HIGH' region motif lies at 11 to 21 (PYVNGYLHLGH). The interval 220-318 (VFYVYELYSL…EYYNTKVETQ (99 aa)) is insert. Residues 699 to 703 (KMSKS) carry the 'KMSKS' region motif. Lys702 contacts ATP.

Belongs to the class-I aminoacyl-tRNA synthetase family.

The protein localises to the cytoplasm. It catalyses the reaction tRNA(Leu) + L-leucine + ATP = L-leucyl-tRNA(Leu) + AMP + diphosphate. The protein is Leucine--tRNA ligase (leuS) of Nanoarchaeum equitans (strain Kin4-M).